Reading from the N-terminus, the 307-residue chain is 4-hydroxythreonine-4-phosphate dehydrogenase (307 aa).

Substrate contacts are provided by H126 and T127. A divalent metal cation is bound by residues H156, H195, and H251. Substrate contacts are provided by K259, N268, and R277.

It belongs to the PdxA family. In terms of assembly, homodimer. Zn(2+) serves as cofactor. Requires Mg(2+) as cofactor. Co(2+) is required as a cofactor.

It localises to the cytoplasm. The catalysed reaction is 4-(phosphooxy)-L-threonine + NAD(+) = 3-amino-2-oxopropyl phosphate + CO2 + NADH. The protein operates within cofactor biosynthesis; pyridoxine 5'-phosphate biosynthesis; pyridoxine 5'-phosphate from D-erythrose 4-phosphate: step 4/5. In terms of biological role, catalyzes the NAD(P)-dependent oxidation of 4-(phosphooxy)-L-threonine (HTP) into 2-amino-3-oxo-4-(phosphooxy)butyric acid which spontaneously decarboxylates to form 3-amino-2-oxopropyl phosphate (AHAP). This is 4-hydroxythreonine-4-phosphate dehydrogenase from Helicobacter pylori (strain P12).